The primary structure comprises 376 residues: Fibromodulin (376 aa).

Residues 1–18 (MQWASILLLRGLCSLSQG) form the signal peptide. At glutamine 19 the chain carries Pyrrolidone carboxylic acid. Residues tyrosine 20, tyrosine 38, tyrosine 53, tyrosine 55, tyrosine 63, and tyrosine 65 each carry the sulfotyrosine modification. Residues 67–105 (APPPPEPRDCPQECDCPPNFPTAMYCDNRNLKYLPFVPS) form the LRRNT domain. LRR repeat units lie at residues 106–127 (RMKY…VFDN), 130–143 (GLLW…QITS), 156–176 (HLER…PLPR), 177–198 (SLRE…ALEG), 201–222 (NLTA…MRGL), 224–245 (SLIL…LPSA), 246–266 (LEQL…YFRG), and 269–289 (KLLY…ATNT). Asparagine 127 is a glycosylation site (N-linked (GlcNAc...) (keratan sulfate) asparagine). N-linked (GlcNAc...) (keratan sulfate) asparagine glycosylation is present at asparagine 166. N-linked (GlcNAc...) (keratan sulfate) asparagine glycosylation occurs at asparagine 201. An N-linked (GlcNAc...) (keratan sulfate) asparagine glycan is attached at asparagine 291. 2 LRR repeats span residues 294-315 (SLLE…NTNL) and 316-335 (ENLY…SFCT). The cysteines at positions 334 and 367 are disulfide-linked. An N-linked (GlcNAc...) asparagine glycan is attached at asparagine 341. The stretch at 344–367 (KLQVLRLDGNEIKRSAMPVDAPLC) is one LRR 11 repeat.

The protein belongs to the small leucine-rich proteoglycan (SLRP) family. SLRP class II subfamily. Binds to type I and type II collagen. Post-translationally, binds keratan sulfate chains.

It localises to the secreted. The protein localises to the extracellular space. The protein resides in the extracellular matrix. Its function is as follows. Affects the rate of fibrils formation. May have a primary role in collagen fibrillogenesis. The sequence is that of Fibromodulin (Fmod) from Rattus norvegicus (Rat).